Reading from the N-terminus, the 178-residue chain is uncharacterized protein (178 aa).

Positions 152–178 (KKLKGAEPKEHQAPNFEPPTEIFPESN) are disordered.

This sequence belongs to the EUO family.

This is an uncharacterized protein from Chlamydia pneumoniae (Chlamydophila pneumoniae).